A 146-amino-acid chain; its full sequence is Hemoglobin subunit beta (146 aa).

Residues Gln2–His146 form the Globin domain. His63 and His92 together coordinate heme b.

Belongs to the globin family. In terms of assembly, heterotetramer of two alpha chains and two beta chains. As to expression, red blood cells.

Functionally, involved in oxygen transport from the lung to the various peripheral tissues. The sequence is that of Hemoglobin subunit beta (HBB) from Struthio camelus (Common ostrich).